Consider the following 404-residue polypeptide: Glucose-1-phosphate adenylyltransferase (404 aa).

Residues tyrosine 99, glycine 164, 179–180 (EK), and serine 197 each bind alpha-D-glucose 1-phosphate.

Belongs to the bacterial/plant glucose-1-phosphate adenylyltransferase family. As to quaternary structure, homotetramer.

It carries out the reaction alpha-D-glucose 1-phosphate + ATP + H(+) = ADP-alpha-D-glucose + diphosphate. The protein operates within glycan biosynthesis; glycogen biosynthesis. Involved in the biosynthesis of ADP-glucose, a building block required for the elongation reactions to produce glycogen. Catalyzes the reaction between ATP and alpha-D-glucose 1-phosphate (G1P) to produce pyrophosphate and ADP-Glc. The polypeptide is Glucose-1-phosphate adenylyltransferase (Rhodococcus jostii (strain RHA1)).